The sequence spans 520 residues: Cytochrome P450 716A67 (520 aa).

Residues 4–24 (SLAIYYGIILITVTLGLVYTW) form a helical membrane-spanning segment. Cys466 is a binding site for heme.

The protein belongs to the cytochrome P450 family. It depends on heme as a cofactor.

It is found in the membrane. Functionally, catalyzes hydroxylation at the C-2 position of different intermediates of the hemolytic sapogenin biosynthetic pathway downstream of oleanolic acid synthesis. The polypeptide is Cytochrome P450 716A67 (Medicago truncatula (Barrel medic)).